Here is a 264-residue protein sequence, read N- to C-terminus: Meiotic recombination protein REC102 (264 aa).

Residues 200 to 221 (LKWQQSSLAPISYALTSNSVLL) are leucine-zipper.

It belongs to the TOP6B-like family. Interacts with REC104; seems to form a functional unit with REC104. REC102-REC104 interacts with SKI8-SPO11 and this interaction is required for proper subcellular location of the proteins during the initiation of recombination. Interacts with MEI4, REC114 and SPO11.

It is found in the nucleus. In terms of biological role, required for formation of the SPO11-mediated double-strand breaks (DSBs) that initiate meiotic recombination. May mediate the interaction between SPO11 subunits during meiosis. Also needed for homolog chromosome pairing, synaptonemal complex formation, and for the proper timing of the first meiotic division. Not required for mitosis and mitotic DNA repair mechanisms. This chain is Meiotic recombination protein REC102 (REC102), found in Saccharomyces cerevisiae (strain RM11-1a) (Baker's yeast).